The chain runs to 22 residues: GLWEKIREKANELVSGIVEGVK.

Residue K22 is modified to Lysine amide.

Expressed by the skin parotoid and/or rostral glands.

The protein localises to the secreted. In terms of biological role, antibacterial peptide, that adopts an alpha helical conformation which can disrupt bacterial membranes. Each caerin displays a different antimicrobial specificity. The sequence is that of Caerin-3.4 from Ranoidea caerulea (Green tree frog).